Here is a 298-residue protein sequence, read N- to C-terminus: Homoserine kinase (298 aa).

Residue 85 to 95 (PMGGLGSSAAS) coordinates ATP.

The protein belongs to the GHMP kinase family. Homoserine kinase subfamily.

The protein resides in the cytoplasm. It catalyses the reaction L-homoserine + ATP = O-phospho-L-homoserine + ADP + H(+). It participates in amino-acid biosynthesis; L-threonine biosynthesis; L-threonine from L-aspartate: step 4/5. In terms of biological role, catalyzes the ATP-dependent phosphorylation of L-homoserine to L-homoserine phosphate. In Methanopyrus kandleri (strain AV19 / DSM 6324 / JCM 9639 / NBRC 100938), this protein is Homoserine kinase.